The following is a 463-amino-acid chain: MAVHNFDVVVIGSGPAGESAAINAAKHGKRVAIVEKQQAVGGNCTHWGTIPSKALRHQVKQIMQFNTNRMFRDIGEPRWFSFPRVLERSKVTIDQQVEMRTQFYSRNRINLFFGVARFRDEHTLTVRDNQDGVEELCAQQFVIATGSRPYRPADINFRHPRIYCSDTILGLSHTPRTLIIFGAGVIGSEYASIFSGLGVKVDLIDMRERLLSFLDDEISDALSYHLRQNGVLVRHNEDYESIEGDESGVIVKLKSGKRLRADAFLWANGRTGNTDELGLENIGLEPNGRGQLQVDEHYRTMVPHIYAVGDVIGWPSLASAAYDQGRSASDDFLDEDFRFVEDIPTGIYTIPEISSVGKNERELTEAKVPYEVAQAFFKDTARAQITGDTVGMLKILFHRETLEILGIHCFGDQASEILHIGQAIMQQKGEANTLKYFINTTFNYPTMAEAYRVAAQNGLNRVF.

Residue 35-44 (EKQQAVGGNC) coordinates FAD.

It belongs to the class-I pyridine nucleotide-disulfide oxidoreductase family. Requires FAD as cofactor.

Its subcellular location is the cytoplasm. It catalyses the reaction NAD(+) + NADPH = NADH + NADP(+). Conversion of NADPH, generated by peripheral catabolic pathways, to NADH, which can enter the respiratory chain for energy generation. The protein is Soluble pyridine nucleotide transhydrogenase of Chromohalobacter salexigens (strain ATCC BAA-138 / DSM 3043 / CIP 106854 / NCIMB 13768 / 1H11).